The following is a 93-amino-acid chain: Acylphosphatase (93 aa).

A disulfide bond links cysteine 5 and cysteine 49. An Acylphosphatase-like domain is found at 5–93 (CIIAWVYGRV…ETLTGFSIRY (89 aa)). Asparagine 38 is a catalytic residue.

The protein belongs to the acylphosphatase family.

The enzyme catalyses an acyl phosphate + H2O = a carboxylate + phosphate + H(+). The chain is Acylphosphatase from Salmonella paratyphi A (strain ATCC 9150 / SARB42).